A 355-amino-acid polypeptide reads, in one-letter code: Elongation factor Ts (355 aa).

The tract at residues 82–85 (TDFV) is involved in Mg(2+) ion dislocation from EF-Tu.

The protein belongs to the EF-Ts family.

It localises to the cytoplasm. Its function is as follows. Associates with the EF-Tu.GDP complex and induces the exchange of GDP to GTP. It remains bound to the aminoacyl-tRNA.EF-Tu.GTP complex up to the GTP hydrolysis stage on the ribosome. The sequence is that of Elongation factor Ts (tsf) from Helicobacter pylori (strain J99 / ATCC 700824) (Campylobacter pylori J99).